A 202-amino-acid polypeptide reads, in one-letter code: LexA repressor (202 aa).

The H-T-H motif DNA-binding region spans 28-48; it reads RAEIAQQLGFRSPNAAEEHLK. Catalysis depends on for autocatalytic cleavage activity residues Ser-119 and Lys-156.

The protein belongs to the peptidase S24 family. Homodimer.

It catalyses the reaction Hydrolysis of Ala-|-Gly bond in repressor LexA.. Represses a number of genes involved in the response to DNA damage (SOS response), including recA and lexA. Binds to the 16 bp palindromic sequence 5'-CTGTATATATATACAG-3'. In the presence of single-stranded DNA, RecA interacts with LexA causing an autocatalytic cleavage which disrupts the DNA-binding part of LexA, leading to derepression of the SOS regulon and eventually DNA repair. This chain is LexA repressor, found in Pectobacterium carotovorum subsp. carotovorum (strain PC1).